The sequence spans 331 residues: L-lactate dehydrogenase A chain (331 aa).

NAD(+)-binding positions include 29–57 and R98; that span reads GMVG…MEDK. The substrate site is built by R105, N137, and R168. N137 is an NAD(+) binding site. H192 functions as the Proton acceptor in the catalytic mechanism. T247 is a substrate binding site.

This sequence belongs to the LDH/MDH superfamily. LDH family. Homotetramer.

It localises to the cytoplasm. The enzyme catalyses (S)-lactate + NAD(+) = pyruvate + NADH + H(+). The protein operates within fermentation; pyruvate fermentation to lactate; (S)-lactate from pyruvate: step 1/1. Interconverts simultaneously and stereospecifically pyruvate and lactate with concomitant interconversion of NADH and NAD(+). This chain is L-lactate dehydrogenase A chain (ldha), found in Notothenia angustata (Rockcod).